The sequence spans 187 residues: Biphenyl 2,3-dioxygenase subunit beta (187 aa).

The protein belongs to the bacterial ring-hydroxylating dioxygenase beta subunit family. Heterohexamer consisting of three BphA1 subunits and three BphA2 subunits. The multicomponent biphenyl dioxygenase system is composed of a ferredoxin reductase (BphA4), a ferredoxin (BphA3), and a terminal oxygenase (BphA1A2).

It carries out the reaction biphenyl + NADH + O2 + H(+) = (2R,3S)-3-phenylcyclohexa-3,5-diene-1,2-diol + NAD(+). The protein operates within xenobiotic degradation; biphenyl degradation; 2-hydroxy-2,4-pentadienoate and benzoate from biphenyl: step 1/4. In terms of biological role, part of the oxygenase component of the biphenyl dioxygenase system that catalyzes the stereospecific dihydroxylation of the aromatic ring of biphenyl, yielding a dihydrodiol compound. Is likely involved in biphenyl degradation that allows growth of Rhodococcus sp. strain RHA1 on biphenyl as the sole source of carbon and energy. Can also use naphtalene and 4-chlorobiphenyl (4-CB) as substrates, as well as some polychlorinated biphenyls (PCB) such as 2,2'-dichlorobiphenyl, 2,3-dichlorobiphenyl and 2,5,2'-trichlorobiphenyl. Exhibits weak activity toward dibenzofuran and dibenzo-p-dioxin. Electrons are transferred from NADH to the [2Fe-2S] cluster in BphA1 via FAD of BphA4 and [2Fe-2S] cluster of BphA3. The chain is Biphenyl 2,3-dioxygenase subunit beta from Rhodococcus jostii (strain RHA1).